The primary structure comprises 131 residues: Large ribosomal subunit protein bL17 (131 aa).

This sequence belongs to the bacterial ribosomal protein bL17 family. Part of the 50S ribosomal subunit. Contacts protein L32.

This Bordetella petrii (strain ATCC BAA-461 / DSM 12804 / CCUG 43448) protein is Large ribosomal subunit protein bL17.